The sequence spans 369 residues: MTPTDFTSPIPNMADDYGSESTSSMEDYVNFNFTDFYCEKNNVRQFASHFLPPLYWLVFIVGALGNSLVILVYWYCTRVKTMTDMFLLNLAIADLLFLVTLPFWAIAAADQWKFQTFMCKVVNSMYKMNFYSCVLLIMCISVDRYIAIAQAMRAHTWREKRLLYSKMVCFTIWVLAAALCIPEILYSQIKEESGIAICTMVYPSDESTKLKSAVLTLKVILGFFLPFVVMACCYTIIIHTLIQAKKSSKHKALKVTITVLTVFVLSQFPYNCILLVQTIDAYAMFISNCAVSTNIDICFQVTQTIAFFHSCLNPVLYVFVGERFRRDLVKTLKNLGCISQAQWVSFTRREGSLKLSSMLLETTSGALSL.

Topologically, residues 1 to 48 are extracellular; sequence MTPTDFTSPIPNMADDYGSESTSSMEDYVNFNFTDFYCEKNNVRQFAS. Asn32 is a glycosylation site (N-linked (GlcNAc...) asparagine). Cystine bridges form between Cys38/Cys289 and Cys119/Cys198. Residues 49-74 traverse the membrane as a helical segment; that stretch reads HFLPPLYWLVFIVGALGNSLVILVYW. Topologically, residues 75–85 are cytoplasmic; that stretch reads YCTRVKTMTDM. Residues 86-109 traverse the membrane as a helical segment; that stretch reads FLLNLAIADLLFLVTLPFWAIAAA. Residues 110 to 120 lie on the Extracellular side of the membrane; that stretch reads DQWKFQTFMCK. The chain crosses the membrane as a helical span at residues 121 to 150; that stretch reads VVNSMYKMNFYSCVLLIMCISVDRYIAIAQ. Over 151–159 the chain is Cytoplasmic; the sequence is AMRAHTWRE. A helical transmembrane segment spans residues 160–185; the sequence is KRLLYSKMVCFTIWVLAAALCIPEIL. Residues 186–208 lie on the Extracellular side of the membrane; that stretch reads YSQIKEESGIAICTMVYPSDEST. A helical transmembrane segment spans residues 209–243; that stretch reads KLKSAVLTLKVILGFFLPFVVMACCYTIIIHTLIQ. Topologically, residues 244–248 are cytoplasmic; it reads AKKSS. A helical transmembrane segment spans residues 249–283; it reads KHKALKVTITVLTVFVLSQFPYNCILLVQTIDAYA. The Extracellular portion of the chain corresponds to 284–290; sequence MFISNCA. A helical transmembrane segment spans residues 291-321; that stretch reads VSTNIDICFQVTQTIAFFHSCLNPVLYVFVG. At 322–369 the chain is on the cytoplasmic side; the sequence is ERFRRDLVKTLKNLGCISQAQWVSFTRREGSLKLSSMLLETTSGALSL.

This sequence belongs to the G-protein coupled receptor 1 family. As to expression, highly expressed in the thymus and low in lymph nodes and spleen.

It localises to the cell membrane. In terms of biological role, receptor for chemokine SCYA25/TECK. Subsequently transduces a signal by increasing the intracellular calcium ions level. Its function is as follows. (Microbial infection) Alternative coreceptor with CD4 for HIV-1 infection. This chain is C-C chemokine receptor type 9 (CCR9), found in Homo sapiens (Human).